We begin with the raw amino-acid sequence, 811 residues long: Receptor-like protein 52 (811 aa).

The first 22 residues, 1–22 (MTFLPLLFIFFFLTSIPFPAFS), serve as a signal peptide directing secretion. Over 23–770 (QYNDRSTLLN…EDEEEVMNWT (748 aa)) the chain is Extracellular. N-linked (GlcNAc...) asparagine glycans are attached at residues Asn-47, Asn-64, Asn-74, Asn-93, Asn-109, and Asn-124. LRR repeat units lie at residues 62-86 (AGNVTEINFQNQNFTGTVPTTICNF), 87-110 (PNLKSLNLSFNYFAGEFPTVLYNC), 112-134 (KLQYLDLSQNLFNGSLPDDINRL), 135-159 (APKLKYLDLAANSFAGDIPKNIGRI), 161-183 (KLKVLNLYMSEYDGTFPSEIGDL), and 184-208 (SELEELQLALNDKFTPVKLPTEFGK). The stretch at 211 to 233 (KLKYMWLEEMNLIGEISAVVFEN) is one LRR 7; degenerate repeat. 5 N-linked (GlcNAc...) asparagine glycosylation sites follow: Asn-233, Asn-246, Asn-260, Asn-295, and Asn-304. LRR repeat units follow at residues 234-258 (MTDLKHVDLSVNNLTGRIPDVLFGL), 260-281 (NLTELYLFANDLTGEIPKSISA), 282-305 (KNLVHLDLSANNLNGSIPESIGNL), 307-329 (NLELLYLFVNELTGEIPRAIGKL), 330-354 (PELKELKLFTNKLTGEIPAEIGFIS), 356-377 (LERFEVSENQLTGKLPENLCHG), 379-401 (KLQSVIVYSNNLTGEIPESLGDC), and 403-427 (TLSSVLLQNNGFSGSVTISNNTRSN). Residues Asn-389, Asn-422, Asn-429, Asn-455, Asn-464, and Asn-485 are each glycosylated (N-linked (GlcNAc...) asparagine). LRR repeat units lie at residues 441–465 (LHSLILLDLSTNKFNGSIPRCIANL), 466–489 (STLEVLNLGKNHLSGSIPENISTS), 491–511 (KSIDIGHNQLAGKLPRSLVRI), 512–537 (SSLEVLNVESNKINDTFPFWLDSMQQ), 539–557 (QVLVLRSNAFHGSINQNGF), 558–581 (SKLRIIDISGNHFNGTLPLDFFVN), 625–649 (LNTFTTIDFSGNKFEGEIPRSVGLL), 650–673 (KELHVLNLSNNGFTGHIPSSMGNL), 674–697 (IELESLDVSQNKLSGEIPPELGKL), and 699–722 (YLAYMNFSQNQFVGLVPGGTQFQT). N-linked (GlcNAc...) asparagine glycosylation is present at Asn-525. N-linked (GlcNAc...) asparagine glycans are attached at residues Asn-571 and Asn-581. Asn-656 is a glycosylation site (N-linked (GlcNAc...) asparagine). Asn-704 is a glycosylation site (N-linked (GlcNAc...) asparagine). Residues 771 to 791 (AAAIGSIPGISIGLTMGYILV) traverse the membrane as a helical segment. Residues 792–811 (SYKPEWLMNSGRNKRRIKPI) lie on the Cytoplasmic side of the membrane.

It belongs to the RLP family.

The protein resides in the cell membrane. In terms of biological role, required for defense against powdery mildew pathogen. This is Receptor-like protein 52 from Arabidopsis thaliana (Mouse-ear cress).